The primary structure comprises 470 residues: Uronate isomerase (470 aa).

It belongs to the metallo-dependent hydrolases superfamily. Uronate isomerase family.

It carries out the reaction D-glucuronate = D-fructuronate. The catalysed reaction is aldehydo-D-galacturonate = keto-D-tagaturonate. Its pathway is carbohydrate metabolism; pentose and glucuronate interconversion. This is Uronate isomerase from Cronobacter sakazakii (strain ATCC BAA-894) (Enterobacter sakazakii).